The sequence spans 736 residues: Segment polarity protein dishevelled homolog DVL-2 (736 aa).

Residues 11 to 93 (VGETKVIYHL…RVVSWLVSSD (83 aa)) enclose the DIX domain. Residues 93 to 255 (DTPQPEVAPP…RMERTSSFSS (163 aa)) form a disordered region. Residues 111-122 (VPPPPPLPPLPP) show a composition bias toward pro residues. Positions 159–171 (LRRDRPRRRDSSE) are enriched in basic and acidic residues. The span at 193–208 (ESSSTLMTSELESTSL) shows a compositional bias: low complexity. Ser-211 is modified (phosphoserine). Residues 218–230 (SRFSSSTEQSSAS) are compositionally biased toward polar residues. Over residues 232 to 244 (LLKRHRRRRKQRP) the composition is skewed to basic residues. The region spanning 267 to 339 (TVTLNMEKYN…NDDAVRVLRD (73 aa)) is the PDZ domain. Positions 433-507 (PESGLEVRDR…SEQCYYVFGD (75 aa)) constitute a DEP domain. Over residues 558-568 (PHPYSPQPPPY) the composition is skewed to pro residues. Residues 558 to 665 (PHPYSPQPPP…PNLRALPGLH (108 aa)) are disordered. Composition is skewed to low complexity over residues 581–598 (ASSQ…TRSD) and 614–629 (SKSG…SRGG).

The protein belongs to the DSH family. As to quaternary structure, interacts through its PDZ domain with the C-terminal regions of VANGL1 and VANGL2. Interacts with Rac. Interacts with ARRB1; the interaction is enhanced by phosphorylation of DVL1. Can form large oligomers (via DIX domain). Interacts (via DIX domain) with DIXDC1 (via DIX domain). Interacts (via DEP domain) with AP2M1 and the AP-2 complex. Interacts with FAM105B/otulin. Interacts with DCDC2. Interacts (when phosphorylated) with FOXK1 and FOXK2; the interaction induces DVL2 nuclear translocation. Interacts with MAPK15. Interacts with PKD1 (via extracellular domain). Interacts with LMBR1L. In terms of processing, phosphorylated by CSNK1D. WNT3A induces DVL2 phosphorylation by CSNK1E and MARK kinases. Ubiquitinated via 'Lys-63'-linked polyubiquitin chains; leading to its autophagy-mediated degradation. As to expression, ubiquitous.

The protein resides in the cell membrane. It is found in the cytoplasm. Its subcellular location is the cytosol. It localises to the cytoplasmic vesicle. The protein localises to the nucleus. In terms of biological role, plays a role in the signal transduction pathways mediated by multiple Wnt genes. Participates both in canonical and non-canonical Wnt signaling by binding to the cytoplasmic C-terminus of frizzled family members and transducing the Wnt signal to down-stream effectors. Promotes internalization and degradation of frizzled proteins upon Wnt signaling. In Mus musculus (Mouse), this protein is Segment polarity protein dishevelled homolog DVL-2 (Dvl2).